A 446-amino-acid chain; its full sequence is Na(+)-translocating NADH-quinone reductase subunit A (446 aa).

Belongs to the NqrA family. In terms of assembly, composed of six subunits; NqrA, NqrB, NqrC, NqrD, NqrE and NqrF.

The catalysed reaction is a ubiquinone + n Na(+)(in) + NADH + H(+) = a ubiquinol + n Na(+)(out) + NAD(+). NQR complex catalyzes the reduction of ubiquinone-1 to ubiquinol by two successive reactions, coupled with the transport of Na(+) ions from the cytoplasm to the periplasm. NqrA to NqrE are probably involved in the second step, the conversion of ubisemiquinone to ubiquinol. This Psychromonas ingrahamii (strain DSM 17664 / CCUG 51855 / 37) protein is Na(+)-translocating NADH-quinone reductase subunit A.